The primary structure comprises 1359 residues: Transcriptional regulator ATRX homolog (1359 aa).

A disordered region spans residues 1 to 402 (MRVGVSESED…RAEKERRKRL (402 aa)). Residues 11 to 49 (SDGHVIEDEDLEMARQIENERKEKRAQKLKEKREREGKP) are compositionally biased toward basic and acidic residues. Basic residues predominate over residues 50–61 (PPKKRPAKKRKA). Acidic residues predominate over residues 64 to 73 (SEEDDDDEEE). 6 stretches are compositionally biased toward basic residues: residues 77-86 (KSSKKSRKRA), 103-123 (KSKS…KKRT), 139-149 (KSKKKSKKTKK), 165-177 (VKKS…KSVK), 194-204 (KKSKKGLKKKA), and 219-229 (KKSKKKSKKVV). Positions 257-271 (ESSESEKSDEEEEEK) are enriched in acidic residues. Positions 321–336 (KDQKSESEASDVEEKV) are enriched in basic and acidic residues. Positions 347 to 357 (SESGSDSSEGS) are enriched in low complexity. Residues 362–376 (RKSKKKEKPEKKKKG) are compositionally biased toward basic residues. Basic and acidic residues predominate over residues 383–397 (KLQKETIDAERAEKE). One can recognise a Helicase ATP-binding domain in the interval 483 to 685 (DRLDTEGSGG…HCMVNFVKPG (203 aa)). 496–503 (HCMGLGKT) provides a ligand contact to ATP. A DEAH box motif is present at residues 636 to 639 (DEAH). A disordered region spans residues 809-891 (RVMREDAEEE…NSDDEDEEDG (83 aa)). The span at 814–832 (DAEEEADFIDDGDGSESES) shows a compositional bias: acidic residues. Over residues 833 to 847 (EGSFKSGSESDSGKS) the composition is skewed to low complexity. The region spanning 951 to 1134 (LLVEIIKKCE…EAQIQRHYLG (184 aa)) is the Helicase C-terminal domain.

Belongs to the SNF2/RAD54 helicase family.

It is found in the nucleus. It carries out the reaction ATP + H2O = ADP + phosphate + H(+). In terms of biological role, required for embryonic development and gonadogenesis. Also, functions redundantly with the transcriptional repressor lin-35 to regulate somatic gonad development. The chain is Transcriptional regulator ATRX homolog from Caenorhabditis elegans.